The primary structure comprises 429 residues: Aspartate--tRNA(Asp/Asn) ligase (429 aa).

L-aspartate is bound at residue glutamate 167. Positions 189–192 (QLYK) are aspartate. Arginine 210 provides a ligand contact to L-aspartate. ATP is bound by residues 210-212 (RAE) and glutamate 352. Residues glutamate 352 and serine 355 each coordinate Mg(2+). The L-aspartate site is built by serine 355 and arginine 359. 400–403 (GLAR) contributes to the ATP binding site.

The protein belongs to the class-II aminoacyl-tRNA synthetase family. Type 2 subfamily. In terms of assembly, homodimer. It depends on Mg(2+) as a cofactor.

It is found in the cytoplasm. It catalyses the reaction tRNA(Asx) + L-aspartate + ATP = L-aspartyl-tRNA(Asx) + AMP + diphosphate. Its function is as follows. Aspartyl-tRNA synthetase with relaxed tRNA specificity since it is able to aspartylate not only its cognate tRNA(Asp) but also tRNA(Asn). Reaction proceeds in two steps: L-aspartate is first activated by ATP to form Asp-AMP and then transferred to the acceptor end of tRNA(Asp/Asn). This Sulfurisphaera tokodaii (strain DSM 16993 / JCM 10545 / NBRC 100140 / 7) (Sulfolobus tokodaii) protein is Aspartate--tRNA(Asp/Asn) ligase.